The sequence spans 71 residues: Omega-conotoxin SO-3 (71 aa).

Residues 1 to 22 (MKLTCMVIVAVLLLTACQLITA) form the signal peptide. Residues 23-45 (DDSRGTQKHRTLRSKTKLSMSTR) constitute a propeptide that is removed on maturation. Disulfide bonds link Cys-46–Cys-61, Cys-53–Cys-65, and Cys-60–Cys-70. A Cysteine amide modification is found at Cys-70.

It belongs to the conotoxin O1 superfamily. As to expression, expressed by the venom duct.

It is found in the secreted. Functionally, omega-conotoxins act at presynaptic membranes, they bind and block voltage-gated calcium channels (Cav). This peptide selectively targets Cav2.2/CACNA1B (IC(50)=160 nM) voltage-gated calcium channels. When tested in mammals, this toxin displays an analgesic potency similar to MVIIA in a range of acute and chronic pain models in rodents, but has less adverse effects (tremor, diminution of spontaneous locomotor activity and bad coordinated locomotion) compared with identical dosages of MVIIA injected intrathecally. This chain is Omega-conotoxin SO-3, found in Conus striatus (Striated cone).